Consider the following 350-residue polypeptide: Biotin synthase (350 aa).

The region spanning 41–268 is the Radical SAM core domain; that stretch reads NEVQISRLLS…KSRVRLSAGR (228 aa). Residues C56, C60, and C63 each contribute to the [4Fe-4S] cluster site. Positions 100, 131, 191, and 263 each coordinate [2Fe-2S] cluster.

It belongs to the radical SAM superfamily. Biotin synthase family. Homodimer. It depends on [4Fe-4S] cluster as a cofactor. The cofactor is [2Fe-2S] cluster.

The enzyme catalyses (4R,5S)-dethiobiotin + (sulfur carrier)-SH + 2 reduced [2Fe-2S]-[ferredoxin] + 2 S-adenosyl-L-methionine = (sulfur carrier)-H + biotin + 2 5'-deoxyadenosine + 2 L-methionine + 2 oxidized [2Fe-2S]-[ferredoxin]. The protein operates within cofactor biosynthesis; biotin biosynthesis; biotin from 7,8-diaminononanoate: step 2/2. Its function is as follows. Catalyzes the conversion of dethiobiotin (DTB) to biotin by the insertion of a sulfur atom into dethiobiotin via a radical-based mechanism. In Shewanella piezotolerans (strain WP3 / JCM 13877), this protein is Biotin synthase.